The following is a 536-amino-acid chain: Phosphoenolpyruvate carboxykinase (ATP) (536 aa).

R61, Y195, and K201 together coordinate substrate. ATP contacts are provided by residues K201, H220, and 236-244 (GLSGTGKTT). Mn(2+)-binding residues include K201 and H220. Position 257 (D257) interacts with Mn(2+). Residues E285, R322, and T447 each coordinate ATP. R322 contacts substrate.

This sequence belongs to the phosphoenolpyruvate carboxykinase (ATP) family. It depends on Mn(2+) as a cofactor.

It is found in the cytoplasm. It carries out the reaction oxaloacetate + ATP = phosphoenolpyruvate + ADP + CO2. Its pathway is carbohydrate biosynthesis; gluconeogenesis. Functionally, involved in the gluconeogenesis. Catalyzes the conversion of oxaloacetate (OAA) to phosphoenolpyruvate (PEP) through direct phosphoryl transfer between the nucleoside triphosphate and OAA. The sequence is that of Phosphoenolpyruvate carboxykinase (ATP) from Chelativorans sp. (strain BNC1).